The sequence spans 275 residues: 2,3,4,5-tetrahydropyridine-2,6-dicarboxylate N-succinyltransferase (275 aa).

Arginine 108 and aspartate 145 together coordinate substrate.

Belongs to the transferase hexapeptide repeat family. As to quaternary structure, homotrimer.

The protein localises to the cytoplasm. It carries out the reaction (S)-2,3,4,5-tetrahydrodipicolinate + succinyl-CoA + H2O = (S)-2-succinylamino-6-oxoheptanedioate + CoA. It participates in amino-acid biosynthesis; L-lysine biosynthesis via DAP pathway; LL-2,6-diaminopimelate from (S)-tetrahydrodipicolinate (succinylase route): step 1/3. The sequence is that of 2,3,4,5-tetrahydropyridine-2,6-dicarboxylate N-succinyltransferase from Maricaulis maris (strain MCS10) (Caulobacter maris).